We begin with the raw amino-acid sequence, 111 residues long: Cytochrome b-c1 complex subunit 7 (111 aa).

The residue at position 2 (alanine 2) is an N-acetylalanine. Lysine 12 carries the post-translational modification N6-acetyllysine; alternate. N6-succinyllysine; alternate is present on lysine 12. Lysine 19 carries the N6-acetyllysine modification. N6-acetyllysine; alternate is present on lysine 78. Lysine 78 bears the N6-succinyllysine; alternate mark. Lysine 83 carries the post-translational modification N6-acetyllysine. N6-acetyllysine; alternate is present on lysine 88. At lysine 88 the chain carries N6-succinyllysine; alternate. The residue at position 96 (lysine 96) is an N6-acetyllysine.

The protein belongs to the UQCRB/QCR7 family. In terms of assembly, component of the ubiquinol-cytochrome c oxidoreductase (cytochrome b-c1 complex, complex III, CIII), a multisubunit enzyme composed of 11 subunits. The complex is composed of 3 respiratory subunits cytochrome b, cytochrome c1 and Rieske protein UQCRFS1, 2 core protein subunits UQCRC1/QCR1 and UQCRC2/QCR2, and 6 low-molecular weight protein subunits UQCRH/QCR6, UQCRB/QCR7, UQCRQ/QCR8, UQCR10/QCR9, UQCR11/QCR10 and subunit 9, the cleavage product of Rieske protein UQCRFS1. The complex exists as an obligatory dimer and forms supercomplexes (SCs) in the inner mitochondrial membrane with NADH-ubiquinone oxidoreductase (complex I, CI) and cytochrome c oxidase (complex IV, CIV), resulting in different assemblies (supercomplex SCI(1)III(2)IV(1) and megacomplex MCI(2)III(2)IV(2)).

The protein localises to the mitochondrion inner membrane. Its function is as follows. Component of the ubiquinol-cytochrome c oxidoreductase, a multisubunit transmembrane complex that is part of the mitochondrial electron transport chain which drives oxidative phosphorylation. The respiratory chain contains 3 multisubunit complexes succinate dehydrogenase (complex II, CII), ubiquinol-cytochrome c oxidoreductase (cytochrome b-c1 complex, complex III, CIII) and cytochrome c oxidase (complex IV, CIV), that cooperate to transfer electrons derived from NADH and succinate to molecular oxygen, creating an electrochemical gradient over the inner membrane that drives transmembrane transport and the ATP synthase. The cytochrome b-c1 complex catalyzes electron transfer from ubiquinol to cytochrome c, linking this redox reaction to translocation of protons across the mitochondrial inner membrane, with protons being carried across the membrane as hydrogens on the quinol. In the process called Q cycle, 2 protons are consumed from the matrix, 4 protons are released into the intermembrane space and 2 electrons are passed to cytochrome c. The polypeptide is Cytochrome b-c1 complex subunit 7 (Uqcrb) (Mus musculus (Mouse)).